We begin with the raw amino-acid sequence, 216 residues long: Pyrophosphatase PpaX (216 aa).

Catalysis depends on Asp9, which acts as the Nucleophile.

It belongs to the HAD-like hydrolase superfamily. PpaX family. Mg(2+) is required as a cofactor.

The enzyme catalyses diphosphate + H2O = 2 phosphate + H(+). Functionally, hydrolyzes pyrophosphate formed during P-Ser-HPr dephosphorylation by HPrK/P. Might play a role in controlling the intracellular pyrophosphate pool. In Bacillus anthracis (strain CDC 684 / NRRL 3495), this protein is Pyrophosphatase PpaX.